Reading from the N-terminus, the 86-residue chain is MeuNaTxbeta-1 (86 aa).

A signal peptide spans 1–20 (MMKIIIFLIVSSLVLIGVKT). Residues 21-83 (DNGYLLDKYT…LWHYETNKCN (63 aa)) form the LCN-type CS-alpha/beta domain. 4 disulfide bridges follow: cysteine 32–cysteine 82, cysteine 36–cysteine 57, cysteine 43–cysteine 64, and cysteine 47–cysteine 66.

Expressed by the venom gland.

Its subcellular location is the secreted. In terms of biological role, inhibits sodium channels (Nav). Also moderately inhibits human calcium-activated potassium channel KCa1.1/KCNMA1/BK (41.9% decrease at 2 uM toxin concentration). Shows moderate antimicrobial activity against both Gram-positive and -negative bacteria. In Mesobuthus eupeus (Lesser Asian scorpion), this protein is MeuNaTxbeta-1.